The following is a 288-amino-acid chain: Hypersensitive-induced response protein-like protein 1 (288 aa).

G2 carries N-myristoyl glycine lipidation.

Positive regulator of hypersensitive response (HR)-like cell death. May be involved in potassium ion channel regulation. This chain is Hypersensitive-induced response protein-like protein 1, found in Oryza sativa subsp. japonica (Rice).